We begin with the raw amino-acid sequence, 136 residues long: Ribosome-binding factor A (136 aa).

Residues 114 to 136 (DRANRPGPAADEPDEPDEPEDRR) form a disordered region. Over residues 124–136 (DEPDEPDEPEDRR) the composition is skewed to acidic residues.

Belongs to the RbfA family. In terms of assembly, monomer. Binds 30S ribosomal subunits, but not 50S ribosomal subunits or 70S ribosomes.

It localises to the cytoplasm. One of several proteins that assist in the late maturation steps of the functional core of the 30S ribosomal subunit. Associates with free 30S ribosomal subunits (but not with 30S subunits that are part of 70S ribosomes or polysomes). Required for efficient processing of 16S rRNA. May interact with the 5'-terminal helix region of 16S rRNA. In Bordetella petrii (strain ATCC BAA-461 / DSM 12804 / CCUG 43448), this protein is Ribosome-binding factor A.